Consider the following 191-residue polypeptide: dTTP/UTP pyrophosphatase (191 aa).

Residue D71 is the Proton acceptor of the active site.

This sequence belongs to the Maf family. YhdE subfamily. A divalent metal cation serves as cofactor.

It localises to the cytoplasm. It catalyses the reaction dTTP + H2O = dTMP + diphosphate + H(+). The catalysed reaction is UTP + H2O = UMP + diphosphate + H(+). In terms of biological role, nucleoside triphosphate pyrophosphatase that hydrolyzes dTTP and UTP. May have a dual role in cell division arrest and in preventing the incorporation of modified nucleotides into cellular nucleic acids. The chain is dTTP/UTP pyrophosphatase from Hyphomonas neptunium (strain ATCC 15444).